Consider the following 929-residue polypeptide: Isoleucine--tRNA ligase (929 aa).

The short motif at 57–67 is the 'HIGH' region element; that stretch reads PYANGNIHVGH. L-isoleucyl-5'-AMP is bound at residue glutamate 554. A 'KMSKS' region motif is present at residues 595–599; sequence KMSKS. Lysine 598 contributes to the ATP binding site. Zn(2+) contacts are provided by cysteine 888, cysteine 891, cysteine 908, and cysteine 911.

Belongs to the class-I aminoacyl-tRNA synthetase family. IleS type 1 subfamily. In terms of assembly, monomer. Requires Zn(2+) as cofactor.

Its subcellular location is the cytoplasm. The catalysed reaction is tRNA(Ile) + L-isoleucine + ATP = L-isoleucyl-tRNA(Ile) + AMP + diphosphate. Catalyzes the attachment of isoleucine to tRNA(Ile). As IleRS can inadvertently accommodate and process structurally similar amino acids such as valine, to avoid such errors it has two additional distinct tRNA(Ile)-dependent editing activities. One activity is designated as 'pretransfer' editing and involves the hydrolysis of activated Val-AMP. The other activity is designated 'posttransfer' editing and involves deacylation of mischarged Val-tRNA(Ile). This chain is Isoleucine--tRNA ligase, found in Streptococcus thermophilus (strain CNRZ 1066).